Reading from the N-terminus, the 322-residue chain is uncharacterized protein (322 aa).

The chain crosses the membrane as a helical span at residues 212–234 (VCALLVGAISVATAGAAFSIIIV).

The protein localises to the membrane. This is an uncharacterized protein from Rickettsia prowazekii (strain Madrid E).